The following is a 229-amino-acid chain: Adenosylcobinamide-GDP ribazoletransferase (229 aa).

Helical transmembrane passes span 31-51, 55-75, 111-131, 134-154, 176-196, and 208-228; these read AMLL…AVLA, AVEL…AASS, AGVL…ATLL, PLLA…VCCT, VAVL…LVLV, and GDVM…AWAA.

Belongs to the CobS family. The cofactor is Mg(2+).

The protein resides in the cell membrane. The catalysed reaction is alpha-ribazole + adenosylcob(III)inamide-GDP = adenosylcob(III)alamin + GMP + H(+). The enzyme catalyses alpha-ribazole 5'-phosphate + adenosylcob(III)inamide-GDP = adenosylcob(III)alamin 5'-phosphate + GMP + H(+). It functions in the pathway cofactor biosynthesis; adenosylcobalamin biosynthesis; adenosylcobalamin from cob(II)yrinate a,c-diamide: step 7/7. Its function is as follows. Joins adenosylcobinamide-GDP and alpha-ribazole to generate adenosylcobalamin (Ado-cobalamin). Also synthesizes adenosylcobalamin 5'-phosphate from adenosylcobinamide-GDP and alpha-ribazole 5'-phosphate. In Nocardioides sp. (strain ATCC BAA-499 / JS614), this protein is Adenosylcobinamide-GDP ribazoletransferase.